The chain runs to 510 residues: NAD(P)H-quinone oxidoreductase subunit 2 A, chloroplastic (510 aa).

Helical transmembrane passes span 31 to 51 (LIFP…IDLT), 57 to 77 (IPWL…ALLF), 99 to 119 (IFQF…VEYI), 124 to 144 (MAIT…MFLC), 149 to 169 (LITI…LSGY), 184 to 204 (LLMG…LYGL), 229 to 249 (ISIA…LAPF), 261 to 281 (PTPV…ALAT), 295 to 315 (WHLL…LIAI), 323 to 343 (MLAY…IVGD), 354 to 374 (YMLF…LFGL), 395 to 415 (ALSL…AGFF), 418 to 438 (LYLF…IGLL), and 484 to 504 (MIVC…IIAI).

It belongs to the complex I subunit 2 family. NDH is composed of at least 16 different subunits, 5 of which are encoded in the nucleus.

It is found in the plastid. It localises to the chloroplast thylakoid membrane. The catalysed reaction is a plastoquinone + NADH + (n+1) H(+)(in) = a plastoquinol + NAD(+) + n H(+)(out). It carries out the reaction a plastoquinone + NADPH + (n+1) H(+)(in) = a plastoquinol + NADP(+) + n H(+)(out). Functionally, NDH shuttles electrons from NAD(P)H:plastoquinone, via FMN and iron-sulfur (Fe-S) centers, to quinones in the photosynthetic chain and possibly in a chloroplast respiratory chain. The immediate electron acceptor for the enzyme in this species is believed to be plastoquinone. Couples the redox reaction to proton translocation, and thus conserves the redox energy in a proton gradient. In Nicotiana tabacum (Common tobacco), this protein is NAD(P)H-quinone oxidoreductase subunit 2 A, chloroplastic.